The chain runs to 76 residues: MTDSVVVRVKPGSHKGPLVEVGPNGELIIYVREPAIDGKANDAVTRLLAAHLQLPKSRVKLVSGATSRFKRFRLSR.

It belongs to the UPF0235 family.

The sequence is that of UPF0235 protein MRA_1997 from Mycobacterium tuberculosis (strain ATCC 25177 / H37Ra).